The following is a 142-amino-acid chain: Alpha-lactalbumin (142 aa).

A signal peptide spans methionine 1 to alanine 19. The region spanning glutamate 20 to leucine 142 is the C-type lysozyme domain. 4 cysteine pairs are disulfide-bonded: cysteine 25–cysteine 139, cysteine 47–cysteine 130, cysteine 80–cysteine 96, and cysteine 92–cysteine 110. Asparagine 64 and asparagine 93 each carry an N-linked (GlcNAc...) asparagine glycan. The Ca(2+) site is built by lysine 98, aspartate 101, aspartate 103, aspartate 106, and aspartate 107.

It belongs to the glycosyl hydrolase 22 family. Lactose synthase (LS) is a heterodimer of a catalytic component, beta1,4-galactosyltransferase (beta4Gal-T1) and a regulatory component, alpha-lactalbumin (LA). In terms of tissue distribution, mammary gland specific. Secreted in milk.

Its subcellular location is the secreted. Regulatory subunit of lactose synthase, changes the substrate specificity of galactosyltransferase in the mammary gland making glucose a good acceptor substrate for this enzyme. This enables LS to synthesize lactose, the major carbohydrate component of milk. In other tissues, galactosyltransferase transfers galactose onto the N-acetylglucosamine of the oligosaccharide chains in glycoproteins. This chain is Alpha-lactalbumin (LALBA), found in Ovis aries (Sheep).